Reading from the N-terminus, the 82-residue chain is Cell division topological specificity factor (82 aa).

It belongs to the MinE family.

Its function is as follows. Prevents the cell division inhibition by proteins MinC and MinD at internal division sites while permitting inhibition at polar sites. This ensures cell division at the proper site by restricting the formation of a division septum at the midpoint of the long axis of the cell. In Buchnera aphidicola subsp. Cinara cedri (strain Cc), this protein is Cell division topological specificity factor.